The following is a 449-amino-acid chain: Packaging protein 1 (449 aa).

The interval 1–78 (METRGRRPAA…PAKRGDMLDR (78 aa)) is disordered. 171–178 (GPTGCGKS) contacts ATP. The tract at residues 440–449 (RAYRARKTPK) is DNA-binding.

This sequence belongs to the adenoviridae packaging protein 1 family. Homodimer. Part of a genome packaging complex composed of packaging proteins 1, 2 and 3; this complex specifically binds to the packaging sequence on the left end of viral genomic DNA and performs packaging of the viral genome. Interacts with protein 33K.

Its subcellular location is the virion. The protein resides in the host nucleus. The protein localises to the host nucleoplasm. It is found in the host nucleolus. Its function is as follows. Component of the packaging machinery which encapsidates the viral DNA into preformed capsids and transcriptional activator of the viral major late promoter (MLP). Binds, along with packaging proteins 2 and 3, to the specific packaging sequence on the left end of viral genomic DNA and displays ATPase activity thereby providing the power stroke of the packaging machinery. The activity of packaging protein IVa2 is stimulated by protein 33K which acts as a terminase. May be the protein that pumps DNA into the capsid powered by ATP hydrolysis. Specifically binds to the 5'-CG-3' nucleotides of the repeats making up the packaging sequence. Component of the DEF-A and DEF-B transcription factors that bind downstream elements of the major late promoter (MLP), and stimulate transcription from the MLP after initiation of viral DNA replication. DEF-A is a heterodimer packaging proteins 1 and 2 and DEF-B is a homodimer of packaging protein 1. This chain is Packaging protein 1, found in Human adenovirus C serotype 5 (HAdV-5).